A 428-amino-acid chain; its full sequence is Type II methyltransferase M.TthHB8I (428 aa).

Positions 407 to 428 are disordered; that stretch reads RKGNTERRKHGPYTSPESAGSF.

It belongs to the N(4)/N(6)-methyltransferase family.

The catalysed reaction is a 2'-deoxyadenosine in DNA + S-adenosyl-L-methionine = an N(6)-methyl-2'-deoxyadenosine in DNA + S-adenosyl-L-homocysteine + H(+). Functionally, a gamma subtype methylase, recognizes the double-stranded sequence 5'-TCGA-3', methylates A-4 on both strands and protects the DNA from cleavage by the TthHB8I endonuclease. This is Type II methyltransferase M.TthHB8I from Thermus thermophilus (strain ATCC 27634 / DSM 579 / HB8).